Reading from the N-terminus, the 2588-residue chain is Histone-lysine N-methyltransferase, H3 lysine-36 specific (2588 aa).

Phosphoserine is present on residues Ser-110 and Ser-118. Disordered regions lie at residues 209–264 and 277–307; these read GSEQ…LGDT and LSFQDDPDSSPSPLGNMLEIPGTSSPSTSQE. Over residues 235–249 the composition is skewed to basic and acidic residues; the sequence is EKQKNKQRSEVDGSN. Over residues 298–307 the composition is skewed to polar residues; the sequence is GTSSPSTSQE. Phosphoserine occurs at positions 380 and 383. The segment at 383 to 403 is disordered; sequence SADEKEKPCAKSRVRKSSDNI. Lys-802 is covalently cross-linked (Glycyl lysine isopeptide (Lys-Gly) (interchain with G-Cter in SUMO2)). Disordered stretches follow at residues 830–899, 947–987, and 1008–1133; these read ASYR…SDKR, ERKR…PGKE, and FDSK…PRLN. Positions 855–874 are enriched in polar residues; that stretch reads GSSTPNSEKPGDSTQDSVHQ. Positions 881 to 895 are enriched in low complexity; that stretch reads SALSGELSSSLSSLA. The span at 1008 to 1033 shows a compositional bias: basic and acidic residues; it reads FDSKAKQSDPDKNLEKEPSFENRKGP. The span at 1054–1073 shows a compositional bias: basic residues; the sequence is PKKRWQRLNQRRPKPGKRAN. Residue Lys-1237 forms a Glycyl lysine isopeptide (Lys-Gly) (interchain with G-Cter in SUMO2) linkage. Positions 1279 to 1324 are disordered; sequence ASPRPALESEELLVKTPGNYESKRQRKPTKKLLESNDLDPGFMPKK. Ser-1408 is subject to Phosphoserine. PHD-type zinc fingers lie at residues 1441 to 1487, 1488 to 1544, and 1605 to 1649; these read ENVC…CHTG, IHTC…CHAA, and VSWC…CKAG. One can recognise a PWWP domain in the interval 1654–1716; sequence YREIVWVKVG…QARVFPYMEG (63 aa). Residues 1788-1838 enclose the AWS domain; sequence SEIPRCNCKATDENPCGIDSECINRMLLYECHPTVCPAGVRCQNQCFSKRQ. One can recognise an SET domain in the interval 1840 to 1957; that stretch reads PDVEIFRTLQ…AGTELTFNYN (118 aa). S-adenosyl-L-methionine contacts are provided by residues 1850–1852, 1892–1895, 1918–1919, Asn-1963, and Lys-1969; these read RGW, TNFY, and NH. Residues 1958-1964 form an inhibits enzyme activity in the absence of bound histone region; sequence LECLGNG. In terms of domain architecture, Post-SET spans 1964–1980; sequence GKTVCKCGAPNCSGFLG. Residues 1989–2010 are disordered; that stretch reads VTEEKSRKFKRKPHGKRRSQGE. The segment covering 1995-2006 has biased composition (basic residues); that stretch reads RKFKRKPHGKRR. The PHD-type 4; atypical zinc-finger motif lies at 2016–2063; it reads EDECFSCGDAGQLVSCKKPGCPKVYHADCLNLTKRPAGKWECPWHQCD. Disordered regions lie at residues 2105-2320, 2333-2423, 2447-2521, and 2560-2588; these read PCGP…PPPE, KEKA…PSEH, YESA…WGLG, and RGQDPKPENAIQALNQAPSSRKCADSEKK. The segment covering 2179–2196 has biased composition (basic and acidic residues); it reads RPPERTDSSSHLLDRIRD. The span at 2201 to 2212 shows a compositional bias: polar residues; the sequence is GTKSQSLVSSQR. Basic and acidic residues predominate over residues 2213 to 2223; sequence PQDRPPAKEGP. Residues 2232–2249 show a composition bias toward low complexity; it reads SPMTRPSSSPSVSSLPLE. A compositionally biased stretch (basic and acidic residues) spans 2250-2261; it reads RPLRMTDSRLDK. Ser-2267 is modified (phosphoserine). Position 2360 is a phosphothreonine (Thr-2360). The residue at position 2369 (Ser-2369) is a Phosphoserine. Lys-2509 participates in a covalent cross-link: Glycyl lysine isopeptide (Lys-Gly) (interchain with G-Cter in SUMO2).

It belongs to the class V-like SAM-binding methyltransferase superfamily. As to quaternary structure, interacts with AR DNA- and ligand-binding domains. Interacts with the ligand-binding domains of RARA and THRA in the absence of ligand; in the presence of ligand the interaction is severely disrupted but some binding still occurs. Interacts with the ligand-binding domains of RXRA and ESRRA only in the presence of ligand. Interacts with ZNF496. Expressed in the embryo and the outer region of the uterine decidua at early post-implantation 5.5 dpc stage. Uniformly expressed in embryonic and extraembryonic tissues during gastrulation stage 7.5 dpc. Expressed differentially after stage 14.5 dpc with highest expression in proliferating cells. Enriched in the telencephalic region of the brain, spinal cord, intestinal crypt, tooth buds, thymus and salivary glands at stage 16.5 dpc. Also expressed in the ossification region of developing bones and in the periosteum.

It is found in the nucleus. The protein resides in the chromosome. It carries out the reaction L-lysyl(36)-[histone H3] + 2 S-adenosyl-L-methionine = N(6),N(6)-dimethyl-L-lysyl(36)-[histone H3] + 2 S-adenosyl-L-homocysteine + 2 H(+). Its function is as follows. Histone methyltransferase that dimethylates Lys-36 of histone H3 (H3K36me2). Transcriptional intermediary factor capable of negatively influencing transcription. May also positively influence transcription. Essential for early post-implantation development. The polypeptide is Histone-lysine N-methyltransferase, H3 lysine-36 specific (Mus musculus (Mouse)).